A 182-amino-acid chain; its full sequence is Transcription antitermination protein NusB (182 aa).

The segment at 159–182 (TPVENSEAEAAGYPVEESIEEDSQ) is disordered.

The protein belongs to the NusB family.

Involved in transcription antitermination. Required for transcription of ribosomal RNA (rRNA) genes. Binds specifically to the boxA antiterminator sequence of the ribosomal RNA (rrn) operons. This chain is Transcription antitermination protein NusB, found in Corynebacterium diphtheriae (strain ATCC 700971 / NCTC 13129 / Biotype gravis).